Reading from the N-terminus, the 291-residue chain is ATP synthase gamma chain (291 aa).

Belongs to the ATPase gamma chain family. As to quaternary structure, F-type ATPases have 2 components, CF(1) - the catalytic core - and CF(0) - the membrane proton channel. CF(1) has five subunits: alpha(3), beta(3), gamma(1), delta(1), epsilon(1). CF(0) has three main subunits: a, b and c.

It is found in the cell inner membrane. Its function is as follows. Produces ATP from ADP in the presence of a proton gradient across the membrane. The gamma chain is believed to be important in regulating ATPase activity and the flow of protons through the CF(0) complex. In Burkholderia pseudomallei (strain 1106a), this protein is ATP synthase gamma chain.